The chain runs to 167 residues: UTP pyrophosphatase (167 aa).

The catalysed reaction is UTP + H2O = UMP + diphosphate + H(+). In terms of biological role, specifically catalyzes the hydrolysis of UTP to UMP and diphosphate in vitro, albeit at apparently slow rate. Shows no activity towards ATP, GTP, CTP, dTTP and ITP as substrates. In Escherichia coli (strain K12), this protein is UTP pyrophosphatase.